Here is a 652-residue protein sequence, read N- to C-terminus: MSEKIYPVPTDIKKNALINEETYQKWYRESINDPEAFWAKHGQRIEWFKPYTKVKNTSFNGDVSIQWYEDGITNVAYNCIDRHLKNSGNHIALIWEGNNPYHDKKITYNELYEHVCRFANILKNHGVKKGDRVTIYLPMIPEAAYAMLACARIGAIHSVIFAGFSSEAIADRIVDCKSTFIITADQGLRGGKLIKLKNNIDHAIDIAARRGVHVNQVLVIRRTSGTIDWVKGRDFWYHEEISHAKTDCPAEMMNAEDPLFILYTSGSTGKPKGVLHTTAGYLVYVSMTHQYVFDYHPGEIYWCTADIGWISGHSYLIYGPLCNGATTLMFEGIPTFPDQGRFWEIVDKHKVNTLYTAPTAIRALMGAGNSFVEHSKRTSLRLLGTVGEPINPEAWKWFYHTVGDNRCPILDTWWQTETGGHMITPLPGATQLKAGSATHPFFGVQLQIIDGEGNVLEGEAEGNLCIIDSWPGQMRTLYNDHERFIETYFSTYKGKYFTGDGCKRDNDGYYWITGRIDDILNVSGHRLGTAEIESALVSHPAISEAAVVGYPHPIKGQGIYSFVTLMEGITPSEELYKDLIQHVKKEIGSIALLDKIQFTPQLPKTRSGKIMRRILRKIAENDFDNLGDISTLAEPQVVDDLIANRQNTEATA.

CoA is bound by residues 189–192 (RGGK) and serine 311. Residues 387-389 (GEP), 411-416 (DTWWQT), aspartate 500, and arginine 515 each bind ATP. Serine 523 contacts CoA. Arginine 526 contacts ATP. Positions 537, 539, and 542 each coordinate Mg(2+). CoA is bound at residue lysine 584. Lysine 609 carries the N6-acetyllysine modification.

This sequence belongs to the ATP-dependent AMP-binding enzyme family. Requires Mg(2+) as cofactor. In terms of processing, acetylated. Deacetylation by the SIR2-homolog deacetylase activates the enzyme.

It catalyses the reaction acetate + ATP + CoA = acetyl-CoA + AMP + diphosphate. Its function is as follows. Catalyzes the conversion of acetate into acetyl-CoA (AcCoA), an essential intermediate at the junction of anabolic and catabolic pathways. AcsA undergoes a two-step reaction. In the first half reaction, AcsA combines acetate with ATP to form acetyl-adenylate (AcAMP) intermediate. In the second half reaction, it can then transfer the acetyl group from AcAMP to the sulfhydryl group of CoA, forming the product AcCoA. This Bartonella quintana (strain Toulouse) (Rochalimaea quintana) protein is Acetyl-coenzyme A synthetase.